The primary structure comprises 196 residues: Interleukin-18 (196 aa).

The propeptide occupies 1 to 29; that stretch reads MSCEEIAVCAVRLRENLCLYFEELECDAF.

Belongs to the IL-1 family. In terms of assembly, forms a ternary complex with ligand-binding receptor subunit IL18R1 and signaling receptor subunit IL18RAP at the plasma membrane. Mature IL18 first binds to IL18R1 forming a low affinity binary complex, which then interacts with IL18RAP to form a high affinity ternary complex that signals inside the cell. Interacts with cargo receptor TMED10; the interaction mediates the translocation from the cytoplasm into the ERGIC (endoplasmic reticulum-Golgi intermediate compartment) and thereby secretion. Post-translationally, the pro-IL-18 precursor is processed by CASP1 or CASP4 to yield the active form.

Its subcellular location is the cytoplasm. It localises to the secreted. Its function is as follows. Augments natural killer cell activity in spleen cells and stimulates interferon gamma production in T-helper type I cells. Involved in transduction of inflammation downstream of pyroptosis: its mature form is specifically released in the extracellular milieu by passing through the gasdermin-D (GSDMD) pore. This is Interleukin-18 (IL18) from Gallus gallus (Chicken).